The sequence spans 427 residues: Terminal nucleotidyltransferase 5B (427 aa).

The disordered stretch occupies residues 1–49; it reads MMPSESGAESLEQPAAQVGTGAASAVATAGAAGGGPDPEASSASLGRHQ. The span at 15 to 30 shows a compositional bias: low complexity; that stretch reads AAQVGTGAASAVATAG.

It belongs to the TENT family.

It localises to the cytoplasm. The protein resides in the nucleus. It carries out the reaction RNA(n) + ATP = RNA(n)-3'-adenine ribonucleotide + diphosphate. Its function is as follows. Catalyzes the transfer of one adenosine molecule from an ATP to an mRNA poly(A) tail bearing a 3'-OH terminal group in an ATP hydrolysis-dependent manner. May be involved in maintaining the translation efficiency of at least some genes through preventing degradation of their mRNAs. Prefers RNA molecules that are adenosine-rich close to 3'-end. In addition, may inhibit cell proliferation and cell cycle progression through ubiquitination of beta-catenin/CTNNB1. This is Terminal nucleotidyltransferase 5B from Mus musculus (Mouse).